The primary structure comprises 784 residues: Ubiquitin carboxyl-terminal hydrolase 1 (784 aa).

Disordered regions lie at residues 1 to 21 and 34 to 56; these read MPGVIPSESNGLSRGSPSKKN and KRALDFTDSQENEEKTSEYRGSE. Residues 7–16 are compositionally biased toward polar residues; sequence SESNGLSRGS. Serine 16 and serine 42 each carry phosphoserine. Residues 45–56 are compositionally biased toward basic and acidic residues; that stretch reads NEEKTSEYRGSE. Serine 67 is modified (phosphoserine). Positions 81–784 constitute a USP domain; that stretch reads VGLNNLGNTC…TPYLLFYKKL (704 aa). Cysteine 90 acts as the Nucleophile in catalysis. 2 stretches are compositionally biased toward basic and acidic residues: residues 233 to 243 and 252 to 264; these read VEEQSLQKEET and DSMRNTEDVKEQL. Disordered stretches follow at residues 233-342 and 362-414; these read VEEQ…INWL and TTNQ…KSGN. Serine 474 carries the phosphoserine modification. Residue histidine 592 is the Proton acceptor of the active site. Positions 684-725 are disordered; it reads NPDKVVGTPFTDNRNSETNDTTNGTHESDRNKESSDQTGVNM. The segment covering 693 to 708 has biased composition (polar residues); it reads FTDNRNSETNDTTNGT. A compositionally biased stretch (basic and acidic residues) spans 709–718; it reads HESDRNKESS. Position 767 is a phosphoserine (serine 767).

The protein belongs to the peptidase C19 family. In terms of assembly, interacts with FANCD2 and PCNA. Interacts with WDR48. Interacts with ATAD5; the interaction regulates USP1-mediated PCNA deubiquitination. Post-translationally, autocatalytic cleavage of USP1 following UV irradiation inactivates it, leading to an increase in ubiquitinated PCNA, recruitment of POLH and translesion synthesis. In terms of processing, ubiquitinated by the CRL2(KLHDC2) complex following autocatalytic cleavage, leading to its degradation: the CRL2(KLHDC2) complex recognizes the diglycine (Gly-Gly) at the C-terminus.

The protein localises to the nucleus. The catalysed reaction is Thiol-dependent hydrolysis of ester, thioester, amide, peptide and isopeptide bonds formed by the C-terminal Gly of ubiquitin (a 76-residue protein attached to proteins as an intracellular targeting signal).. Its function is as follows. Negative regulator of DNA damage repair which specifically deubiquitinates monoubiquitinated FANCD2. Also involved in PCNA-mediated translesion synthesis (TLS) by deubiquitinating monoubiquitinated PCNA. Has almost no deubiquitinating activity by itself and requires the interaction with WDR48 to have a high activity. This chain is Ubiquitin carboxyl-terminal hydrolase 1, found in Mus musculus (Mouse).